A 639-amino-acid chain; its full sequence is Actin assembly-inducing protein (639 aa).

The N-terminal stretch at 1-29 (MGLNRFMRAMMVVFITANCITINPDIIFA) is a signal peptide. 4 disordered regions span residues 36-71 (SSLN…SSRD), 132-212 (RRHP…QPFF), 285-308 (LGFN…TDEE), and 320-341 (LGFN…PPTE). Residues 41-52 (DEWEEEKTEEQP) are compositionally biased toward acidic residues. Residues 62-71 (ETAREVSSRD) show a composition bias toward basic and acidic residues. Over residues 190 to 210 (DSSMQSADESSPQPLKANQQP) the composition is skewed to polar residues. 2 tandem repeats follow at residues 264–298 (DFPP…PSSF) and 299–333 (EFPP…PSSF). Positions 264–333 (DFPPPPTDEE…APATSEPSSF (70 aa)) are 5 X approximate tandem repeats, Pro-rich. Residues 334 to 378 (EFPPPPTEDELEIIRETASSLDSSFTRGDLASLRNAINRHSQNFS) form a 3; approximate repeat. A Cell attachment site motif is present at residues 360–362 (RGD). Disordered stretches follow at residues 372 to 459 (RHSQ…LSPK) and 474 to 610 (KKTP…EPGN). Residues 379–417 (DFPPIPTEEELNGRGGRPTSEEFSSLNSGDFTDDENSET) form a 4; approximate repeat. Positions 409-422 (FTDDENSETTEEEI) are enriched in acidic residues. One copy of the 5; truncated repeat lies at 418 to 422 (TEEEI). Basic and acidic residues predominate over residues 423–433 (DRLADLRDRGT). Composition is skewed to low complexity over residues 450–459 (SSPVPSLSPK) and 490–509 (KKTT…TAPK). Composition is skewed to basic and acidic residues over residues 553–572 (EATE…KMVE) and 588–609 (GIEE…EEPG). The chain crosses the membrane as a helical span at residues 613-633 (TLILAMLAIGVFSLGAFIKII).

The protein localises to the cell membrane. Virulence factor required for host cell microfilament interaction. It induces actin assembly around the bacteria to allow it to move within the cytoplasm. It is involved in the actin polymerization process. It seems to act as a nucleator that induces the reorganization of the actin cytoskeleton. This Listeria monocytogenes serovar 1/2a (strain ATCC BAA-679 / EGD-e) protein is Actin assembly-inducing protein (actA).